The primary structure comprises 275 residues: Arylalkylamine N-acetyltransferase 1 (275 aa).

Residues 181–183 and 189–193 each bind acetyl-CoA; these read LSV and GLGIA. The N-acetyltransferase domain maps to 181–254; it reads LSVDTNYRGL…GEVVFKPAAP (74 aa).

Belongs to the acetyltransferase family. AANAT subfamily. In the adult, expressed in the midgut portion of the thoracic segments and the frontal half of the abdomen (at protein level). Expressed in the epithelial cell layer facing the lumen of the gut (at protein level). In the brain, expressed in a sub-populations of neurons and astrocytes, and in a set of distinct stripes in the optic lobes (at protein level). Expressed mainly in serotonergic neurons but also in subsets of glutamatergic, GABAergic and cholinergic neurons (at protein level).

The protein resides in the cytoplasm. The protein localises to the nucleus. It carries out the reaction a 2-arylethylamine + acetyl-CoA = an N-acetyl-2-arylethylamine + CoA + H(+). The enzyme catalyses serotonin + acetyl-CoA = N-acetylserotonin + CoA + H(+). The catalysed reaction is dopamine + acetyl-CoA = N-acetyldopamine + CoA + H(+). It catalyses the reaction tyramine + acetyl-CoA = N-acetyltyramine + CoA + H(+). It carries out the reaction octopamine + acetyl-CoA = N-acetyloctopamine + CoA + H(+). The enzyme catalyses 5-methoxytryptamine + acetyl-CoA = melatonin + CoA + H(+). The catalysed reaction is 2-phenylethylamine + acetyl-CoA = N-(2-phenylethyl)acetamide + CoA + H(+). It catalyses the reaction noradrenaline + acetyl-CoA = N-acetylnoradrenaline + CoA + H(+). It carries out the reaction tyramine + butanoyl-CoA = N-butanoyltyramine + CoA + H(+). The enzyme catalyses tyramine + hexanoyl-CoA = N-hexanoyltyramine + CoA + H(+). The catalysed reaction is tryptamine + acetyl-CoA = N-acetyltryptamine + CoA + H(+). It catalyses the reaction dopamine + hexadecanoyl-CoA = N-hexadecanoyl-dopamine + CoA + H(+). It carries out the reaction dopamine + (9Z)-octadecenoyl-CoA = N-(9Z-octadecanoyl)-dopamine + CoA + H(+). The enzyme catalyses serotonin + hexadecanoyl-CoA = N-hexadecanoyl-serotonin + CoA + H(+). The catalysed reaction is serotonin + (9Z)-octadecenoyl-CoA = N-(9Z-octadecenoyl)-serotonin + CoA + H(+). It catalyses the reaction serotonin + octadecanoyl-CoA = N-octadecanoyl-serotonin + CoA + H(+). It carries out the reaction serotonin + (5Z,8Z,11Z,14Z)-eicosatetraenoyl-CoA = N-[(5Z,8Z,11Z,14Z)-eicosatetraenoyl]-serotonin + CoA + H(+). Its pathway is aromatic compound metabolism; melatonin biosynthesis; melatonin from serotonin: step 1/2. With respect to regulation, inhibited by long-chain acyl-CoA thioesters, oleoyl-CoA (an analog of acetyl-CoA) and tyrosol (an analog of tyramine). In terms of biological role, catalyzes N-acetylation of tryptamine, tyramine, dopamine, serotonin and octopamine. In astrocytes, regulates sleep homeostasis by limiting the accumulation of serotonin and dopamine in the brain upon sleep deprivation. Is not essential for sclerotization. The polypeptide is Arylalkylamine N-acetyltransferase 1 (Drosophila melanogaster (Fruit fly)).